The primary structure comprises 397 residues: Acetate kinase 2 (397 aa).

Asparagine 10 contacts Mg(2+). Position 17 (lysine 17) interacts with ATP. Residue arginine 90 participates in substrate binding. Aspartate 147 acts as the Proton donor/acceptor in catalysis. ATP contacts are provided by residues 207-211 (HLGNG), 281-283 (DAR), and 329-333 (GIGEN). Glutamate 385 lines the Mg(2+) pocket.

Belongs to the acetokinase family. Homodimer. The cofactor is Mg(2+). Requires Mn(2+) as cofactor.

It is found in the cytoplasm. It catalyses the reaction acetate + ATP = acetyl phosphate + ADP. It functions in the pathway metabolic intermediate biosynthesis; acetyl-CoA biosynthesis; acetyl-CoA from acetate: step 1/2. In terms of biological role, catalyzes the formation of acetyl phosphate from acetate and ATP. Can also catalyze the reverse reaction. The polypeptide is Acetate kinase 2 (Vibrio cholerae serotype O1 (strain ATCC 39315 / El Tor Inaba N16961)).